Here is a 369-residue protein sequence, read N- to C-terminus: Probable dual-specificity RNA methyltransferase RlmN (369 aa).

The active-site Proton acceptor is E108. In terms of domain architecture, Radical SAM core spans 114–351; it reads YPDRATLCIS…IAQGVSCTVR (238 aa). A disulfide bridge links C121 with C362. [4Fe-4S] cluster-binding residues include C128, C132, and C135. Residues 183 to 184, S217, 240 to 242, and N319 each bind S-adenosyl-L-methionine; these read GE and SLH. C362 (S-methylcysteine intermediate) is an active-site residue.

Belongs to the radical SAM superfamily. RlmN family. [4Fe-4S] cluster serves as cofactor.

It localises to the cytoplasm. The catalysed reaction is adenosine(2503) in 23S rRNA + 2 reduced [2Fe-2S]-[ferredoxin] + 2 S-adenosyl-L-methionine = 2-methyladenosine(2503) in 23S rRNA + 5'-deoxyadenosine + L-methionine + 2 oxidized [2Fe-2S]-[ferredoxin] + S-adenosyl-L-homocysteine. It carries out the reaction adenosine(37) in tRNA + 2 reduced [2Fe-2S]-[ferredoxin] + 2 S-adenosyl-L-methionine = 2-methyladenosine(37) in tRNA + 5'-deoxyadenosine + L-methionine + 2 oxidized [2Fe-2S]-[ferredoxin] + S-adenosyl-L-homocysteine. Specifically methylates position 2 of adenine 2503 in 23S rRNA and position 2 of adenine 37 in tRNAs. This is Probable dual-specificity RNA methyltransferase RlmN from Rhodococcus erythropolis (strain PR4 / NBRC 100887).